Consider the following 367-residue polypeptide: Uroporphyrinogen decarboxylase (367 aa).

N-acetylmethionine is present on Met-1. Residues Arg-37, Ala-39, Arg-41, Arg-50, Asp-86, Tyr-164, Ser-219, and His-339 each coordinate coproporphyrinogen I. Positions 37, 39, and 41 each coordinate coproporphyrinogen III. Asp-86, Tyr-164, Ser-219, and His-339 together coordinate coproporphyrinogen III.

This sequence belongs to the uroporphyrinogen decarboxylase family. As to quaternary structure, homodimer.

It localises to the cytoplasm. The protein resides in the cytosol. It carries out the reaction uroporphyrinogen III + 4 H(+) = coproporphyrinogen III + 4 CO2. It catalyses the reaction uroporphyrinogen I + 4 H(+) = coproporphyrinogen I + 4 CO2. It participates in porphyrin-containing compound metabolism; protoporphyrin-IX biosynthesis; coproporphyrinogen-III from 5-aminolevulinate: step 4/4. Functionally, catalyzes the sequential decarboxylation of the four acetate side chains of uroporphyrinogen to form coproporphyrinogen and participates in the fifth step in the heme biosynthetic pathway. Isomer I or isomer III of uroporphyrinogen may serve as substrate, but only coproporphyrinogen III can ultimately be converted to heme. In vitro also decarboxylates pentacarboxylate porphyrinogen I. This is Uroporphyrinogen decarboxylase from Mus musculus (Mouse).